Reading from the N-terminus, the 624-residue chain is Leucine-rich repeat and IQ domain-containing protein 3 (624 aa).

3 LRR repeats span residues serine 51–isoleucine 72, lysine 73–asparagine 94, and asparagine 98–serine 119. Positions cysteine 132 to histidine 179 constitute an LRRCT domain. In terms of domain architecture, IQ spans histidine 215 to lysine 244. Residues lysine 553 to leucine 614 adopt a coiled-coil conformation.

This chain is Leucine-rich repeat and IQ domain-containing protein 3 (LRRIQ3), found in Homo sapiens (Human).